Consider the following 463-residue polypeptide: Alpha-L-arabinofuranosidase B (463 aa).

The first 26 residues, 1–26, serve as a signal peptide directing secretion; that stretch reads MIPQLNRNYAWAIALGLVARSSLVSA. Residues 27-308 form a catalytic region; it reads GPCDIYASGG…ILGIGGHNSK (282 aa). An intrachain disulfide couples Cys29 to Cys39. Residue Asn81 is glycosylated (N-linked (GlcNAc...) asparagine). Disulfide bonds link Cys89–Cys94 and Cys184–Cys185. Position 227 (Asp227) interacts with substrate. The active-site Nucleophile is the Glu229. Substrate is bound at residue Asn230. Asn280 carries an N-linked (GlcNAc...) asparagine glycan. Gly304 lines the substrate pocket. Residues 309–463 are ABD; that stretch reads LTVGSSISLR…VSWVVSASFA (155 aa). The N-linked (GlcNAc...) asparagine glycan is linked to Asn332. Residues Cys366 and Cys404 are joined by a disulfide bond. Residues His381, Asn383, Phe384, His428, Asp430, Leu433, and Asp453 each coordinate substrate.

It belongs to the glycosyl hydrolase 54 family. Residue Asn-280 is mannosylated with up to 7 mannose residues.

Its subcellular location is the secreted. It catalyses the reaction Hydrolysis of terminal non-reducing alpha-L-arabinofuranoside residues in alpha-L-arabinosides.. The protein operates within glycan metabolism; L-arabinan degradation. Functionally, secreted alpha-L-arabinofuranosidase that actively hydrolyzes p-NP-alpha-L-arabinofuranoside and is specific for furanose configuration of the carbohydrate ring. Also exhibits significant activity against polymeric arabinose-containing substrates such as arabinan and arabinoxylan, a major component of plant hemicellulose. The polypeptide is Alpha-L-arabinofuranosidase B (abfB) (Penicillium canescens).